The chain runs to 352 residues: Ribosomal RNA large subunit methyltransferase M (352 aa).

S-adenosyl-L-methionine contacts are provided by residues Ser-187, 218-221, Asp-237, Asp-257, and Asp-273; that span reads APGG. Catalysis depends on Lys-302, which acts as the Proton acceptor.

This sequence belongs to the class I-like SAM-binding methyltransferase superfamily. RNA methyltransferase RlmE family. RlmM subfamily. Monomer.

It localises to the cytoplasm. It catalyses the reaction cytidine(2498) in 23S rRNA + S-adenosyl-L-methionine = 2'-O-methylcytidine(2498) in 23S rRNA + S-adenosyl-L-homocysteine + H(+). Catalyzes the 2'-O-methylation at nucleotide C2498 in 23S rRNA. The polypeptide is Ribosomal RNA large subunit methyltransferase M (Methylococcus capsulatus (strain ATCC 33009 / NCIMB 11132 / Bath)).